The following is a 505-amino-acid chain: Glutamate--tRNA ligase (505 aa).

The short motif at 12–22 (PSPTGDPHVGT) is the 'HIGH' region element. The 'KMSKS' region motif lies at 253–257 (KLSKR). Residue K256 participates in ATP binding.

This sequence belongs to the class-I aminoacyl-tRNA synthetase family. Glutamate--tRNA ligase type 1 subfamily. In terms of assembly, monomer.

The protein localises to the cytoplasm. It carries out the reaction tRNA(Glu) + L-glutamate + ATP = L-glutamyl-tRNA(Glu) + AMP + diphosphate. Functionally, catalyzes the attachment of glutamate to tRNA(Glu) in a two-step reaction: glutamate is first activated by ATP to form Glu-AMP and then transferred to the acceptor end of tRNA(Glu). The chain is Glutamate--tRNA ligase from Chlamydia abortus (strain DSM 27085 / S26/3) (Chlamydophila abortus).